The primary structure comprises 172 residues: Protein LHCP TRANSLOCATION DEFECT (172 aa).

The N-terminal 28 residues, 1 to 28, are a transit peptide targeting the chloroplast; the sequence is MASIPCTFQLSARASSASAAAAARRSPR. One copy of the ANK repeat lies at 114–146; sequence PVDILLMLAASEGDKPKLEELLRAGAKYDVKDV.

The protein resides in the plastid. It is found in the chloroplast. Involved in the import of light-harvesting complex proteins (LHCP) and subsequent routing of these proteins to the chloroplast signal recognition particle (SRP) pathway. This Oryza sativa subsp. indica (Rice) protein is Protein LHCP TRANSLOCATION DEFECT (LTD).